Here is a 341-residue protein sequence, read N- to C-terminus: Anthranilate phosphoribosyltransferase (341 aa).

Residues Gly-79, 82–83 (GD), Thr-87, 89–92 (NIST), 107–115 (KHGNRAASS), and Ser-119 each bind 5-phospho-alpha-D-ribose 1-diphosphate. Residue Gly-79 participates in anthranilate binding. Ser-91 contributes to the Mg(2+) binding site. Asn-110 is a binding site for anthranilate. Arg-165 is an anthranilate binding site. Mg(2+) is bound by residues Asp-224 and Glu-225.

This sequence belongs to the anthranilate phosphoribosyltransferase family. As to quaternary structure, homodimer. Mg(2+) is required as a cofactor.

It catalyses the reaction N-(5-phospho-beta-D-ribosyl)anthranilate + diphosphate = 5-phospho-alpha-D-ribose 1-diphosphate + anthranilate. It functions in the pathway amino-acid biosynthesis; L-tryptophan biosynthesis; L-tryptophan from chorismate: step 2/5. Functionally, catalyzes the transfer of the phosphoribosyl group of 5-phosphorylribose-1-pyrophosphate (PRPP) to anthranilate to yield N-(5'-phosphoribosyl)-anthranilate (PRA). This chain is Anthranilate phosphoribosyltransferase, found in Dehalococcoides mccartyi (strain ATCC BAA-2266 / KCTC 15142 / 195) (Dehalococcoides ethenogenes (strain 195)).